Here is a 440-residue protein sequence, read N- to C-terminus: Signal recognition particle 54 kDa protein (440 aa).

GTP contacts are provided by residues 104–111 (GLQGSGKT), 184–188 (DTAGR), and 242–245 (TKLD).

This sequence belongs to the GTP-binding SRP family. SRP54 subfamily. As to quaternary structure, part of the signal recognition particle protein translocation system, which is composed of SRP and FtsY. Archaeal SRP consists of a 7S RNA molecule of 300 nucleotides and two protein subunits: SRP54 and SRP19.

It is found in the cytoplasm. It catalyses the reaction GTP + H2O = GDP + phosphate + H(+). Its function is as follows. Involved in targeting and insertion of nascent membrane proteins into the cytoplasmic membrane. Binds to the hydrophobic signal sequence of the ribosome-nascent chain (RNC) as it emerges from the ribosomes. The SRP-RNC complex is then targeted to the cytoplasmic membrane where it interacts with the SRP receptor FtsY. This Methanosarcina acetivorans (strain ATCC 35395 / DSM 2834 / JCM 12185 / C2A) protein is Signal recognition particle 54 kDa protein.